A 276-amino-acid chain; its full sequence is Undecaprenyl-diphosphatase 1 (276 aa).

Transmembrane regions (helical) follow at residues 83-103, 108-128, 187-207, 217-237, and 252-272; these read FTLNVVIATIPAIALGLLFEK, VLFSPVPVAFALVVGGAIILW, VATEFSFFLAIPIIFGATLYE, VDSLGLFALGLVAAFVSAFVC, and VFAWYRIAFGLFVLLVGYSGW.

This sequence belongs to the UppP family.

The protein localises to the cell inner membrane. It catalyses the reaction di-trans,octa-cis-undecaprenyl diphosphate + H2O = di-trans,octa-cis-undecaprenyl phosphate + phosphate + H(+). Its function is as follows. Catalyzes the dephosphorylation of undecaprenyl diphosphate (UPP). Confers resistance to bacitracin. The protein is Undecaprenyl-diphosphatase 1 of Burkholderia cenocepacia (strain HI2424).